A 71-amino-acid polypeptide reads, in one-letter code: DNA-directed RNA polymerase subunit 10-like protein (71 aa).

Zn(2+) is bound by residues Cys7, Cys10, Cys44, and Cys45.

Belongs to the archaeal Rpo10/eukaryotic RPB10 RNA polymerase subunit family. In terms of assembly, interacts with IYO.

Its subcellular location is the nucleus. This Arabidopsis thaliana (Mouse-ear cress) protein is DNA-directed RNA polymerase subunit 10-like protein.